A 694-amino-acid chain; its full sequence is Follicle-stimulating hormone receptor (694 aa).

The first 17 residues, 1–17 (MALLLVSLLAFLSLGSG), serve as a signal peptide directing secretion. 2 disulfide bridges follow: Cys-18/Cys-25 and Cys-23/Cys-32. In terms of domain architecture, LRRNT spans 18-46 (CHHRVCHCSNRVFLCQESKVTEIPSDLPR). Over 18 to 365 (CHHRVCHCSN…EDIMGYDILR (348 aa)) the chain is Extracellular. LRR repeat units follow at residues 49–72 (LELR…FGDL), 73–97 (EKIE…LPKL), 98–118 (HEIR…AFQN), 119–143 (LPNL…KIQS), 144–169 (LQKV…MGLS), 170–192 (FEST…AFNG), 193–216 (TQLD…VFQG), 217–240 (ASGP…GLEN), and 241–259 (LKKL…PSLE). 2 N-linked (GlcNAc...) asparagine glycosylation sites follow: Asn-191 and Asn-199. Asn-268 is a glycosylation site (N-linked (GlcNAc...) asparagine). Cystine bridges form between Cys-275–Cys-345, Cys-276–Cys-292, Cys-276–Cys-355, and Cys-292–Cys-337. The N-linked (GlcNAc...) asparagine glycan is linked to Asn-293. At Tyr-334 the chain carries Sulfotyrosine. Residues 366 to 386 (VLIWFISILAITGNIIVLVIL) form a helical membrane-spanning segment. Residues 387–397 (ITSQYKLTVPR) are Cytoplasmic-facing. Residues 398–420 (FLMCNLAFADLCIGIYLLLIASV) traverse the membrane as a helical segment. The Extracellular segment spans residues 421–442 (DIHTKSQYHNYAIDWQTGAGCD). Residues Cys-441 and Cys-516 are joined by a disulfide bond. A helical transmembrane segment spans residues 443-464 (AAGFFTVFASELSVYTLTAITL). The Cytoplasmic portion of the chain corresponds to 465–484 (ERWHTITHAMQLECKVQLRH). The chain crosses the membrane as a helical span at residues 485 to 507 (AASVMLVGWIFAFAVALLPIFGI). The Extracellular segment spans residues 508-527 (STYMKVSICLPMDIDSPLSQ). A helical transmembrane segment spans residues 528 to 549 (LYVMSLLVLNVLAFVVICGCYI). At 550 to 572 (HIYLTVRNPNIVSSSSDTKIAKR) the chain is on the cytoplasmic side. The helical transmembrane segment at 573–596 (MAILIFTDFLCMAPISFFAISASL) threads the bilayer. Over 597–607 (KVPLITVSKSK) the chain is Extracellular. A helical transmembrane segment spans residues 608-629 (ILLVLFYPINSCANPFLYAIFT). Over 630-694 (KNFRRDFFIL…LVPLSHLAQN (65 aa)) the chain is Cytoplasmic.

Belongs to the G-protein coupled receptor 1 family. FSH/LSH/TSH subfamily. As to quaternary structure, homotrimer. Functions as a homotrimer binding the FSH hormone heterodimer composed of CGA and FSHB. Interacts with ARRB2. Interacts with APPL2; interaction is independent of follicle stimulating hormone stimulation. Post-translationally, N-glycosylated; indirectly required for FSH-binding, possibly via a conformational change that allows high affinity binding of hormone. In terms of processing, sulfated.

The protein resides in the cell membrane. Functionally, g protein-coupled receptor for follitropin, the follicle-stimulating hormone. Through cAMP production activates the downstream PI3K-AKT and ERK1/ERK2 signaling pathways. The polypeptide is Follicle-stimulating hormone receptor (FSHR) (Equus caballus (Horse)).